The following is a 1085-amino-acid chain: DNA mismatch repair protein MutS (1085 aa).

The interval 533-564 (DEDLFGEEEQNAPPVGSSNHAVGTQPSADDEA) is disordered. Positions 548–559 (GSSNHAVGTQPS) are enriched in polar residues. 812–819 (GPNMSGKS) provides a ligand contact to ATP. The tract at residues 997-1042 (ERRAPRSAPPTVPARGDDRRSAGRASSSGAGAARGEQGRTLPDGQL) is disordered. Positions 1019-1031 (GRASSSGAGAARG) are enriched in low complexity.

Belongs to the DNA mismatch repair MutS family.

In terms of biological role, this protein is involved in the repair of mismatches in DNA. It is possible that it carries out the mismatch recognition step. This protein has a weak ATPase activity. This is DNA mismatch repair protein MutS from Roseiflexus sp. (strain RS-1).